The following is a 56-amino-acid chain: Small ribosomal subunit protein uS14 (56 aa).

The Zn(2+) site is built by cysteine 21, cysteine 24, cysteine 39, and cysteine 42.

It belongs to the universal ribosomal protein uS14 family. Requires Zn(2+) as cofactor.

This chain is Small ribosomal subunit protein uS14 (RPS29), found in Eremothecium gossypii (strain ATCC 10895 / CBS 109.51 / FGSC 9923 / NRRL Y-1056) (Yeast).